An 85-amino-acid polypeptide reads, in one-letter code: Alpha-toxin BmalphaTx47 (85 aa).

Positions 1 to 19 are cleaved as a signal peptide; the sequence is MNYLIVISFALLLMTGVQS. The 63-residue stretch at 21-83 folds into the LCN-type CS-alpha/beta domain; sequence RDAYIADSEN…VPIRISGSCR (63 aa). 4 disulfide bridges follow: Cys-31–Cys-82, Cys-35–Cys-55, Cys-41–Cys-65, and Cys-45–Cys-67.

The protein belongs to the long (4 C-C) scorpion toxin superfamily. Sodium channel inhibitor family. Alpha subfamily. In terms of tissue distribution, expressed by the venom gland.

Its subcellular location is the secreted. In terms of biological role, alpha toxins bind voltage-independently at site-3 of sodium channels (Nav) and inhibit the inactivation of the activated channels, thereby blocking neuronal transmission. This toxin expressed with the pET-14b vector has low inhibitory activity on sodium channels (11.33% on rNav1.2/SCN2A, 15.96% on mNav1.4/SCN4A and 5.04% on hNav1.5/SCN5A). When expressed with the pET-28a vector, this toxin has higher inhibitory activities (44.12% on rNav1.2/SCN2A, 25.40% on mNav1.4/SCN4A and 65.34% on hNav1.5/SCN5A). The polypeptide is Alpha-toxin BmalphaTx47 (Olivierus martensii (Manchurian scorpion)).